The chain runs to 28 residues: Alkaline serine protease NJP (28 aa).

Inhibited by PMSF. Not or very weakly inhibited by EDTA, EGTA, beta-mercaptoethanol, benzamidine, aprotinin, iodoacetic acid, pepstatin A and SBTI. In terms of biological role, alkaline thrombin-like serine protease. Has fibrinolytic and fibrinogenolytic but not plasminogenolytic activity. Cleaves fibrinogen chains Aalpha, Bbeta and gamma chains in that order. Cleaves after Arg and Lys residues. The chain is Alkaline serine protease NJP from Hediste japonica (Polychaete worm).